Consider the following 207-residue polypeptide: Guanylate kinase (207 aa).

The 180-residue stretch at 6–185 (GLLIVLSGPS…AKNRIQCIVE (180 aa)) folds into the Guanylate kinase-like domain. 13-20 (GPSGVGKG) serves as a coordination point for ATP.

Belongs to the guanylate kinase family.

It localises to the cytoplasm. It carries out the reaction GMP + ATP = GDP + ADP. Essential for recycling GMP and indirectly, cGMP. The protein is Guanylate kinase of Staphylococcus aureus (strain Mu50 / ATCC 700699).